Reading from the N-terminus, the 206-residue chain is Isochorismatase domain-containing protein 2A (206 aa).

Lys-26 carries the post-translational modification N6-succinyllysine. N6-acetyllysine; alternate is present on residues Lys-93 and Lys-178. Residues Lys-93 and Lys-178 each carry the N6-succinyllysine; alternate modification. N6-acetyllysine occurs at positions 182 and 185.

Belongs to the isochorismatase family. In terms of assembly, interacts with CDKN2A. As to expression, ubiquitous. Expressed predominantly in uterus, stomach and urinary tract.

Its subcellular location is the cytoplasm. The protein localises to the nucleus. In Mus musculus (Mouse), this protein is Isochorismatase domain-containing protein 2A.